The primary structure comprises 3739 residues: Cardiomyopathy-associated protein 5 (3739 aa).

Disordered regions lie at residues 1–205 (MESG…PPIT), 268–814 (SLEP…SAFV), 835–884 (VSVS…AIQS), 967–1270 (LSED…SDVP), 1288–1313 (TQAS…RDAK), 1325–1637 (SSAL…NLVS), 1650–1969 (EMNR…EKGK), 1986–2016 (SSIP…AIEP), 2065–2246 (FLSN…WETR), 2273–2318 (AVGE…LALD), 2377–2498 (VYPE…SAVE), 2513–2532 (KKQE…TSKD), and 2579–2616 (SADG…SEDQ). Residues 18 to 47 (ADEEVAQELETEEESEGEGEETAAESEEEP) show a composition bias toward acidic residues. Over residues 48–62 (DARLSDEDEEGKTKQ) the composition is skewed to basic and acidic residues. Residues 84-106 (TWETNSSRSSTPWASGESQTSGI) show a composition bias toward polar residues. Residues 130-153 (RTRKRTQKSKRGSPSLRRKGSKKR) show a composition bias toward basic residues. Ser155 is subject to Phosphoserine. Polar residues-rich tracts occupy residues 156-175 (LESQ…SESP) and 325-336 (ADSNLNVPSSTE). The stretch at 380–406 (ATMVLERAKEELEQNAQGKESSEDDAS) forms a coiled coil. Composition is skewed to basic and acidic residues over residues 479 to 637 (IVHR…REEE), 644 to 663 (SIVH…REEE), and 670 to 730 (SIVH…ERGV). Repeat copies occupy residues 482–493 (REEEHAPEPIVH) and 494–505 (REEEHAPEPIVH). The segment at 482–720 (REEEHAPEPI…EEHAPEPMVH (239 aa)) is 20 X 12 AA approximate tandem repeats of R-[DE]-[EK]-[EG]-H-[AV]-P-E-[PS]-[IM]-V-[HLR]. A 3; approximate repeat occupies 506–519 (REEEHAPEPESIVH). Repeat unit 4 spans residues 520–531 (REEEHAPESIVH). The 5; approximate repeat unit spans residues 532 to 545 (REEEHAPEPVPIVH). One copy of the 6; approximate repeat lies at 546–559 (REEEHAPEPESIVH). Tandem repeats lie at residues 560–571 (REEEHAPEPIVH), 572–583 (RDKGHALEPIVH), 584–595 (REEEHAPEPIVH), and 596–607 (RDEGHAPEPIVH). The 11; approximate repeat unit spans residues 608–621 (REEEHVPEPESIVR). The 12; approximate repeat unit spans residues 622 to 633 (KGEEHAPEPIVH). One copy of the 14; approximate repeat lies at 634-647 (REEEQVPEPESIVH). Repeat 15 spans residues 648-659 (REEEHAPEPIVH). A 16; approximate repeat occupies 660-673 (REEEQVPEPESIVH). Repeat copies occupy residues 674–685 (REEEHAPEPMVL), 686–696 (REEHAPEPIVR), 697–708 (REEEHAPEPIVH), and 709–720 (REEEHAPEPMVH). Positions 740–756 (TEPEDSSLEEEIIELDY) are enriched in acidic residues. Phosphoserine is present on Ser850. 2 stretches are compositionally biased toward polar residues: residues 861–884 (PAMT…AIQS) and 1151–1161 (CLTSPSEQTVL). Composition is skewed to basic and acidic residues over residues 1188 to 1197 (AETEQNKVEP) and 1230 to 1242 (EHSE…EESS). Residues 1337-1351 (TSVLPTSQPSVSPES) show a composition bias toward polar residues. Basic and acidic residues-rich tracts occupy residues 1441–1460 (LEQR…HSPP) and 1476–1486 (TEVKQESKITR). Residues 1522-1540 (ASSSATTVPVTKLDSNSTK) are compositionally biased toward polar residues. 6 stretches are compositionally biased toward basic and acidic residues: residues 1620-1631 (NDKHEEITRSPD), 1697-1706 (IDSRDRDRSL), 1726-1742 (GPAE…ENRK), 1760-1770 (IEQKEPKRTLH), 1786-1803 (DKPE…ENLE), and 1836-1850 (EKPD…DRKP). The segment covering 1854-1863 (QLESSESTDL) has biased composition (polar residues). 4 stretches are compositionally biased toward basic and acidic residues: residues 1874-1885 (DTDHTSETRNQE), 1896-1916 (LSQE…EGRK), 1992-2001 (KVSDNEDLET), and 2153-2165 (ARKE…HKET). The span at 2181–2190 (KSAQSAFTRM) shows a compositional bias: polar residues. Position 2192 is a phosphoserine (Ser2192). Basic and acidic residues-rich tracts occupy residues 2212–2244 (GEDR…DGWE), 2279–2299 (RMPE…RLEQ), 2306–2318 (KLME…LALD), 2377–2419 (VYPE…ETDG), and 2429–2448 (ELEK…RRFV). Ser2411 carries the post-translational modification Phosphoserine. Position 2495 is a phosphoserine (Ser2495). A compositionally biased stretch (basic and acidic residues) spans 2513 to 2523 (KKQETWSDRPT). The stretch at 2640-2664 (SVDQEESEQMQDKLQYLEEKASFKS) forms a coiled coil. Disordered stretches follow at residues 2667–2725 (VHDE…QPTV), 2742–2773 (LSPG…SSAE), 2791–2835 (GPEK…GMPL), 2881–2959 (EKNE…EREI), 3027–3047 (LESE…DVNL), and 3111–3174 (PEEP…QKEP). Residues 2682–2709 (SKLEVPDRKITSLKENKTKETHKTKEEI) show a composition bias toward basic and acidic residues. Residues 2731-3041 (YFEKYTLIDY…SSQGNEAGNA (311 aa)) form a required for RYR2 clustering region. The span at 2762 to 2773 (KTLTSFPESSAE) shows a compositional bias: polar residues. Basic and acidic residues-rich tracts occupy residues 2791–2804 (GPEK…HAEM) and 2812–2828 (KPDD…DVDS). A Phosphoserine modification is found at Ser2905. Residues 2918–2929 (YILKDDILHDES) are compositionally biased toward basic and acidic residues. The span at 3030 to 3047 (EPSSQGNEAGNASPDVNL) shows a compositional bias: polar residues. Residues 3153 to 3162 (VWDRTEDQSA) show a composition bias toward basic and acidic residues. An amphipathic helix H1 region spans residues 3187 to 3214 (KSLVSEMDKALDIHKDHEVSALDTAISA). A B-box coiled-coil; BBC region spans residues 3215-3342 (VKVQLGEFLE…ERLLSAMEST (128 aa)). The stretch at 3244–3323 (FNTIEEKCSK…REAEELDETV (80 aa)) forms a coiled coil. An amphipathic helix H2 region spans residues 3301-3318 (SMDTAKDTLETIVREAEE). Fibronectin type-III domains are found at residues 3374–3475 (VPQP…TAPS) and 3476–3568 (TPVI…TRGT). Positions 3421–3437 (EINELVEEYRLTVKESC) are amphipathic helix H3. The region spanning 3550–3735 (NASGTSEQSE…LHLGLEPPDS (186 aa)) is the B30.2/SPRY domain.

Interacts with PRKAR2A. Interacts with ACTN2, DES and DTNBP1/dysbindin. Interacts with DMD/dystrophin. Interacts with the calcineurin catalytic subunit PPP3CA. Interacts with TTN. Interacts with CAPN3; this interaction, which results in CMYA5 proteolysis, may protect CAPN3 from autolysis. Interacts with FSD2. In cardiac muscles, identified in a complex composed of FSD2, CMYA5 and RYR2. Phosphorylated by PKA. In terms of tissue distribution, expressed in skin as well as in cardiac muscle. Expressed in skeletal muscle (at protein level).

The protein resides in the nucleus. It is found in the cytoplasm. The protein localises to the perinuclear region. Its subcellular location is the myofibril. It localises to the sarcomere. The protein resides in the m line. It is found in the sarcoplasmic reticulum. Functionally, may serve as an anchoring protein that mediates the subcellular compartmentation of protein kinase A (PKA) via binding to PRKAR2A. May attenuate calcineurin ability to induce slow-fiber gene program in muscle and may negatively modulate skeletal muscle regeneration. Plays a role in the assembly of ryanodine receptor (RYR2) clusters in striated muscle. The protein is Cardiomyopathy-associated protein 5 (Cmya5) of Mus musculus (Mouse).